We begin with the raw amino-acid sequence, 332 residues long: D-alanine--D-alanine ligase (332 aa).

Residues 112-312 (KRIWRADGLP…YPDLCLRILA (201 aa)) form the ATP-grasp domain. 138–193 (FQELGAPMIVKPSREGSTIGLTKVTSLGQCEQAYRLAAQHDPEVLCEQFIDGDETT) contacts ATP. 3 residues coordinate Mg(2+): Asp-265, Glu-279, and Asn-281.

Belongs to the D-alanine--D-alanine ligase family. Mg(2+) serves as cofactor. It depends on Mn(2+) as a cofactor.

The protein resides in the cytoplasm. The enzyme catalyses 2 D-alanine + ATP = D-alanyl-D-alanine + ADP + phosphate + H(+). Its pathway is cell wall biogenesis; peptidoglycan biosynthesis. Functionally, cell wall formation. The protein is D-alanine--D-alanine ligase of Acidovorax ebreus (strain TPSY) (Diaphorobacter sp. (strain TPSY)).